A 233-amino-acid chain; its full sequence is Endonuclease V (233 aa).

Residues Asp48 and Asp116 each coordinate Mg(2+).

It belongs to the endonuclease V family. Requires Mg(2+) as cofactor.

Its subcellular location is the cytoplasm. The catalysed reaction is Endonucleolytic cleavage at apurinic or apyrimidinic sites to products with a 5'-phosphate.. DNA repair enzyme involved in the repair of deaminated bases. Selectively cleaves double-stranded DNA at the second phosphodiester bond 3' to a deoxyinosine leaving behind the intact lesion on the nicked DNA. This chain is Endonuclease V, found in Streptomyces coelicolor (strain ATCC BAA-471 / A3(2) / M145).